Consider the following 837-residue polypeptide: V-type proton ATPase 116 kDa subunit a 1 (837 aa).

Over 1 to 388 (MGELFRSEEM…DAYGIGTYRE (388 aa)) the chain is Cytoplasmic. Threonine 250 and threonine 360 each carry phosphothreonine. Phosphotyrosine is present on tyrosine 364. The helical transmembrane segment at 389 to 407 (INPAPYTIITFPFLFAVMF) threads the bilayer. Over 408 to 409 (GD) the chain is Vacuolar. Residues 410–426 (FGHGILMTLFAVWMVLR) form a helical membrane-spanning segment. Over 427–441 (ESRILSQKNENEMFS) the chain is Cytoplasmic. The chain crosses the membrane as a helical span at residues 442-471 (TVFSGRYIILLMGVFSMYTGLIYNDCFSKS). The Vacuolar portion of the chain corresponds to 472-534 (LNIFGSSWSV…ATNKLTFLNS (63 aa)). The chain crosses the membrane as a helical span at residues 535 to 554 (FKMKMSVILGIIHMLFGVSL). Over 555 to 572 (SLFNHIYFKKPLNIYFGF) the chain is Cytoplasmic. A helical transmembrane segment spans residues 573–593 (IPEIIFMTSLFGYLVILIFYK). Topologically, residues 594-638 (WTAYDAHTSENAPSLLIHFINMFLFSYPESGYSMLYSGQKGIQCF) are vacuolar. A helical membrane pass occupies residues 639–658 (LVVVALLCVPWMLLFKPLVL). Topologically, residues 659–724 (RRQYLRRKHL…ATMVHQAIHT (66 aa)) are cytoplasmic. A helical membrane pass occupies residues 725-749 (IEYCLGCISNTASYLRLWALSLAHA). At 750-770 (QLSEVLWTMVIHIGLSVKSLA) the chain is on the vacuolar side. A helical membrane pass occupies residues 771-809 (GGLVLFFFFTAFATLTVAILLIMEGLSAFLHALRLHWVE). Over 810–837 (FQNKFYSGTGFKFLPFSFEHIREGKFGE) the chain is Cytoplasmic.

It belongs to the V-ATPase 116 kDa subunit family. As to quaternary structure, V-ATPase is a heteromultimeric enzyme made up of two complexes: the ATP-hydrolytic V1 complex and the proton translocation V0 complex. The V1 complex consists of three catalytic AB heterodimers that form a heterohexamer, three peripheral stalks each consisting of EG heterodimers, one central rotor including subunits D and F, and the regulatory subunits C and H. The proton translocation complex V0 consists of the proton transport subunit a, a ring of proteolipid subunits c9c'', rotary subunit d, subunits e and f, and the accessory subunits ATP6AP1/Ac45 and ATP6AP2/PRR. Interacts with SPAAR.

The protein resides in the cytoplasmic vesicle. It is found in the clathrin-coated vesicle membrane. The protein localises to the secretory vesicle. It localises to the synaptic vesicle membrane. Its subcellular location is the melanosome. Subunit of the V0 complex of vacuolar(H+)-ATPase (V-ATPase), a multisubunit enzyme composed of a peripheral complex (V1) that hydrolyzes ATP and a membrane integral complex (V0) that translocates protons. V-ATPase is responsible for the acidification of various organelles, such as lysosomes, endosomes, the trans-Golgi network, and secretory granules, including synaptic vesicles. In certain cell types, can be exported to the plasma membrane, where it is involved in the acidification of the extracellular environment. Required for assembly and activity of the vacuolar ATPase. Through its action on compartment acidification, plays an essential role in neuronal development in terms of integrity and connectivity of neurons. The sequence is that of V-type proton ATPase 116 kDa subunit a 1 (ATP6V0A1) from Pongo abelii (Sumatran orangutan).